Here is a 579-residue protein sequence, read N- to C-terminus: Glutamine--tRNA ligase (579 aa).

The 'HIGH' region signature appears at 41 to 51; it reads PEPNGYLHIGH. ATP is bound by residues 42–44 and 48–54; these read EPN and HIGHAKA. L-glutamine-binding residues include Asp-74 and Tyr-218. ATP contacts are provided by residues Thr-237, 285-286, and 293-295; these read RL and MSK. Positions 292–296 match the 'KMSKS' region motif; that stretch reads VMSKR.

This sequence belongs to the class-I aminoacyl-tRNA synthetase family. Monomer.

It is found in the cytoplasm. The enzyme catalyses tRNA(Gln) + L-glutamine + ATP = L-glutaminyl-tRNA(Gln) + AMP + diphosphate. This chain is Glutamine--tRNA ligase, found in Xanthomonas axonopodis pv. citri (strain 306).